We begin with the raw amino-acid sequence, 355 residues long: 3-dehydroquinate synthase (355 aa).

Residues 71–76 (EGEASK), 105–109 (GVVGD), 129–130 (TS), Lys-142, Lys-151, and 169–172 (TLKT) contribute to the NAD(+) site. Positions 184, 246, and 263 each coordinate Zn(2+).

It belongs to the sugar phosphate cyclases superfamily. Dehydroquinate synthase family. The cofactor is Co(2+). It depends on Zn(2+) as a cofactor. Requires NAD(+) as cofactor.

Its subcellular location is the cytoplasm. It catalyses the reaction 7-phospho-2-dehydro-3-deoxy-D-arabino-heptonate = 3-dehydroquinate + phosphate. It functions in the pathway metabolic intermediate biosynthesis; chorismate biosynthesis; chorismate from D-erythrose 4-phosphate and phosphoenolpyruvate: step 2/7. In terms of biological role, catalyzes the conversion of 3-deoxy-D-arabino-heptulosonate 7-phosphate (DAHP) to dehydroquinate (DHQ). In Streptococcus suis (strain 98HAH33), this protein is 3-dehydroquinate synthase.